The sequence spans 72 residues: Large ribosomal subunit protein bL28 (72 aa).

Belongs to the bacterial ribosomal protein bL28 family.

In Chlorobium phaeovibrioides (strain DSM 265 / 1930) (Prosthecochloris vibrioformis (strain DSM 265)), this protein is Large ribosomal subunit protein bL28.